Reading from the N-terminus, the 208-residue chain is Small ribosomal subunit protein uS4 (208 aa).

One can recognise an S4 RNA-binding domain in the interval 95-159 (RRIDNIVYRA…FKKLVRSNIE (65 aa)).

Belongs to the universal ribosomal protein uS4 family. Part of the 30S ribosomal subunit. Contacts protein S5. The interaction surface between S4 and S5 is involved in control of translational fidelity.

In terms of biological role, one of the primary rRNA binding proteins, it binds directly to 16S rRNA where it nucleates assembly of the body of the 30S subunit. Functionally, with S5 and S12 plays an important role in translational accuracy. This chain is Small ribosomal subunit protein uS4, found in Borrelia recurrentis (strain A1).